Reading from the N-terminus, the 378-residue chain is uncharacterized protein (378 aa).

The segment covering 1–11 has biased composition (polar residues); sequence MSQQTTPAEQK. Residues 1-33 form a disordered region; the sequence is MSQQTTPAEQKSLQRKKPPFRADQVGSLLRSEP.

The protein to B.subtilis YxjH.

This is an uncharacterized protein from Bacillus subtilis (strain 168).